A 517-amino-acid chain; its full sequence is MLSPIEAIVGLVTFTFLFYFLWTKKSQKPSKPLPPKIPGGWPVIGHLFHFNDDGDDRPLARKLGDLADKYGPVFTFRLGLPLVLVVSSYEAVKDCFSTNDAIFSNRPAFLYGDYLGYNNAMLFLANYGPYWRKNRKLVIQEVLSASRLEKFKHVRFARIQASIKNLYTRIDGNSSTINLTDWLEELNFGLIVKMIAGKNYESGKGDEQVERFKKAFKDFMILSMEFVLWDAFPIPLFKWVDFQGHVKAMKRTFKDIDSVFQNWLEEHINKREKMEVNAEGNEQDFIDVVLSKMSNEYLGEGYSRDTVIKATVFSLVLDAADTVALHINWGMALLINNQKALTKAQEEIDTKVGKDRWVEESDIKDLVYLQAIVKEVLRLYPPGPLLVPHENVEDCVVSGYHIPKGTRLFANVMKLQRDPKLWSDPDTFDPERFIATDIDFRGQYYKYIPFGSGRRSCPGMTYALQVEHLTMAHLIQGFNYRTPNDEPLDMKEGAGITIRKVNPVELIIAPRLAPELY.

The helical transmembrane segment at 2 to 22 (LSPIEAIVGLVTFTFLFYFLW) threads the bilayer. Lysine 254 is covalently cross-linked (Glycyl lysine isopeptide (Lys-Gly) (interchain with G-Cter in ubiquitin)). Position 457 (cysteine 457) interacts with heme.

Belongs to the cytochrome P450 family. CYP82E2 subfamily. Heme serves as cofactor. In terms of tissue distribution, expressed in leaves.

The protein resides in the membrane. It carries out the reaction (S)-nicotine + reduced [NADPH--hemoprotein reductase] + O2 = (S)-nornicotine + formaldehyde + oxidized [NADPH--hemoprotein reductase] + H2O + H(+). It participates in alkaloid biosynthesis; nicotine biosynthesis. Involved in the biosynthesis of pyridine alkaloid natural products, leading mainly to the production of anabasine, anatabine, nicotine and nornicotine, effective deterrents against herbivores with antiparasitic and pesticide properties (neurotoxins); nornicotine serves as the precursor in the synthesis of the carcinogen compound N'-nitrosonornicotine (NNN). Catalyzes the demethylation of nicotine to form nornicotine. This chain is Nicotine N-demethylase CYP82E4, found in Nicotiana tomentosiformis (Tobacco).